The chain runs to 569 residues: Proline--tRNA ligase (569 aa).

This sequence belongs to the class-II aminoacyl-tRNA synthetase family. ProS type 1 subfamily. Homodimer.

It localises to the cytoplasm. It carries out the reaction tRNA(Pro) + L-proline + ATP = L-prolyl-tRNA(Pro) + AMP + diphosphate. Functionally, catalyzes the attachment of proline to tRNA(Pro) in a two-step reaction: proline is first activated by ATP to form Pro-AMP and then transferred to the acceptor end of tRNA(Pro). As ProRS can inadvertently accommodate and process non-cognate amino acids such as alanine and cysteine, to avoid such errors it has two additional distinct editing activities against alanine. One activity is designated as 'pretransfer' editing and involves the tRNA(Pro)-independent hydrolysis of activated Ala-AMP. The other activity is designated 'posttransfer' editing and involves deacylation of mischarged Ala-tRNA(Pro). The misacylated Cys-tRNA(Pro) is not edited by ProRS. The sequence is that of Proline--tRNA ligase from Dehalococcoides mccartyi (strain CBDB1).